The primary structure comprises 196 residues: Large ribosomal subunit protein uL18 (196 aa).

This sequence belongs to the universal ribosomal protein uL18 family. In terms of assembly, part of the 50S ribosomal subunit. Contacts the 5S and 23S rRNAs.

Its function is as follows. This is one of the proteins that bind and probably mediate the attachment of the 5S RNA into the large ribosomal subunit, where it forms part of the central protuberance. The chain is Large ribosomal subunit protein uL18 from Sulfurisphaera tokodaii (strain DSM 16993 / JCM 10545 / NBRC 100140 / 7) (Sulfolobus tokodaii).